The sequence spans 313 residues: Dimethyladenosine transferase (313 aa).

The disordered stretch occupies residues methionine 1–glutamate 21. S-adenosyl-L-methionine is bound by residues histidine 37, leucine 39, glycine 64, glutamate 85, aspartate 113, and asparagine 128.

It belongs to the class I-like SAM-binding methyltransferase superfamily. rRNA adenine N(6)-methyltransferase family. As to quaternary structure, part of the small subunit (SSU) processome, composed of more than 70 proteins and the RNA chaperone small nucleolar RNA (snoRNA) U3.

It localises to the nucleus. Its subcellular location is the nucleoplasm. The protein localises to the nucleolus. It carries out the reaction adenosine(1779)/adenosine(1780) in 18S rRNA + 4 S-adenosyl-L-methionine = N(6)-dimethyladenosine(1779)/N(6)-dimethyladenosine(1780) in 18S rRNA + 4 S-adenosyl-L-homocysteine + 4 H(+). Functionally, specifically dimethylates two adjacent adenosines in the loop of a conserved hairpin near the 3'-end of 18S rRNA in the 40S particle. Involved in the pre-rRNA processing steps leading to small-subunit rRNA production independently of its RNA-modifying catalytic activity. Part of the small subunit (SSU) processome, first precursor of the small eukaryotic ribosomal subunit. During the assembly of the SSU processome in the nucleolus, many ribosome biogenesis factors, an RNA chaperone and ribosomal proteins associate with the nascent pre-rRNA and work in concert to generate RNA folding, modifications, rearrangements and cleavage as well as targeted degradation of pre-ribosomal RNA by the RNA exosome. This is Dimethyladenosine transferase from Homo sapiens (Human).